A 561-amino-acid chain; its full sequence is MQAALTLLEALCLQGLKQLVLCPGSRSGPLATAAGVLASQAKLQLVTAIDERSAAFLALGMATAHGRVVAVVTTSGTAVSNLLPAAVEADRSCQPLLLLTADRPVRLKNCGANQTVNQESFLLAACRWFGSGAADGIHTQANDALNALAVKAWQQAQGAGTGPPGAVHLNLPFEEPLHTTLEQQQQLASAALPPTACPEPSPGIGPALRLDPERPGVVVAGPWRGLTLSLEAHQQALHRWLNLSGWPLLADPLAALPPDCPNRIEHWELQLDRLSLPDDAQVLRLGPMPASRRLEAWLQRHQGPQLLITEGDPRPLDPLHTANQWSGGMAAWIAQQPGLKQATKPSVGTNDLSPWLETQLPLRGAVTEPALAYWLPQLLPEQLPVMLAASSPVRDWLTWGGYSCGRHRCFSFRGASGIDGTLSLAMGLAANLGPLALVTGDLALLHDSNGWLHASSAAAPPPLLVLLIDNGGGGIFQQLPIATPGFESLFAMPQQVDSLALAAAHGVPGRQVACLEDLQEALAWGLSQQRPVLLRLCSDRGRDAVLRQQLRAAAQNEGTEL.

This sequence belongs to the TPP enzyme family. MenD subfamily. Homodimer. It depends on Mg(2+) as a cofactor. Mn(2+) serves as cofactor. The cofactor is thiamine diphosphate.

It carries out the reaction isochorismate + 2-oxoglutarate + H(+) = 5-enolpyruvoyl-6-hydroxy-2-succinyl-cyclohex-3-ene-1-carboxylate + CO2. Its pathway is quinol/quinone metabolism; 1,4-dihydroxy-2-naphthoate biosynthesis; 1,4-dihydroxy-2-naphthoate from chorismate: step 2/7. It participates in cofactor biosynthesis; phylloquinone biosynthesis. Catalyzes the thiamine diphosphate-dependent decarboxylation of 2-oxoglutarate and the subsequent addition of the resulting succinic semialdehyde-thiamine pyrophosphate anion to isochorismate to yield 2-succinyl-5-enolpyruvyl-6-hydroxy-3-cyclohexene-1-carboxylate (SEPHCHC). The protein is 2-succinyl-5-enolpyruvyl-6-hydroxy-3-cyclohexene-1-carboxylate synthase of Synechococcus sp. (strain CC9605).